Consider the following 392-residue polypeptide: Galactokinase (392 aa).

A substrate-binding site is contributed by 33 to 36 (EHTD). Residues S67 and 129–135 (GSGLSSS) contribute to the ATP site. Mg(2+) contacts are provided by S135 and E167. Catalysis depends on D179, which acts as the Proton acceptor. Residue Y229 participates in substrate binding.

This sequence belongs to the GHMP kinase family. GalK subfamily.

It localises to the cytoplasm. It carries out the reaction alpha-D-galactose + ATP = alpha-D-galactose 1-phosphate + ADP + H(+). It functions in the pathway carbohydrate metabolism; galactose metabolism. Functionally, catalyzes the transfer of the gamma-phosphate of ATP to D-galactose to form alpha-D-galactose-1-phosphate (Gal-1-P). This chain is Galactokinase, found in Limosilactobacillus reuteri (strain DSM 20016) (Lactobacillus reuteri).